We begin with the raw amino-acid sequence, 732 residues long: Formin-homology and zinc finger domains protein 1 (732 aa).

4 stretches are compositionally biased toward low complexity: residues M1–S12, Q19–S45, Q121–S137, and S240–P251. Positions M1–A27 are cleaved as a signal peptide. Disordered regions lie at residues M1 to S45, Q121 to K141, and R232 to T267. Residues S256–T267 show a composition bias toward polar residues. Positions P355–P732 constitute an FH2 domain.

It belongs to the formin homology family. In terms of tissue distribution, transiently expressed in all mesoderm derived progenitor body wall muscle cells before they differentiate.

In terms of biological role, acts redundantly with hlh-1 to promote body wall muscle cell and coelomocyte specification in postembryonic mesoderm progenitors, probably through suppression of sem-2. The polypeptide is Formin-homology and zinc finger domains protein 1 (Caenorhabditis elegans).